We begin with the raw amino-acid sequence, 220 residues long: Ribosomal RNA large subunit methyltransferase E (220 aa).

Residues 1–10 are compositionally biased toward basic and acidic residues; sequence MSRSGKDPGK. Residues 1–24 are disordered; sequence MSRSGKDPGKRVKTARKRSASSTR. The S-adenosyl-L-methionine site is built by Gly75, Trp77, Asp94, Asp110, and Asp134. Lys174 (proton acceptor) is an active-site residue.

This sequence belongs to the class I-like SAM-binding methyltransferase superfamily. RNA methyltransferase RlmE family.

The protein resides in the cytoplasm. The enzyme catalyses uridine(2552) in 23S rRNA + S-adenosyl-L-methionine = 2'-O-methyluridine(2552) in 23S rRNA + S-adenosyl-L-homocysteine + H(+). In terms of biological role, specifically methylates the uridine in position 2552 of 23S rRNA at the 2'-O position of the ribose in the fully assembled 50S ribosomal subunit. The chain is Ribosomal RNA large subunit methyltransferase E from Erythrobacter litoralis (strain HTCC2594).